We begin with the raw amino-acid sequence, 266 residues long: UPF0294 protein YafD (266 aa).

Belongs to the UPF0294 family.

It is found in the cytoplasm. The sequence is that of UPF0294 protein YafD from Salmonella paratyphi C (strain RKS4594).